Reading from the N-terminus, the 359-residue chain is Peptide chain release factor 1 (359 aa).

Residue Q236 is modified to N5-methylglutamine.

The protein belongs to the prokaryotic/mitochondrial release factor family. In terms of processing, methylated by PrmC. Methylation increases the termination efficiency of RF1.

It localises to the cytoplasm. Its function is as follows. Peptide chain release factor 1 directs the termination of translation in response to the peptide chain termination codons UAG and UAA. This chain is Peptide chain release factor 1, found in Streptococcus mutans serotype c (strain ATCC 700610 / UA159).